Here is a 154-residue protein sequence, read N- to C-terminus: Ribonuclease 8 (154 aa).

Positions 1–27 (MAPARAGCCPLLLLLLGLWVAEVLVRA) are cleaved as a signal peptide. His42 serves as the catalytic Proton acceptor. Cystine bridges form between Cys50–Cys93, Cys64–Cys118, Cys82–Cys133, and Cys89–Cys96. Substrate is bound by residues 65–69 (KDLNT) and Lys90. The Proton donor role is filled by His149.

The protein belongs to the pancreatic ribonuclease family. As to expression, expressed prominently in the placenta and is not detected in any other tissues examined.

The protein resides in the secreted. Functionally, has a low ribonuclease activity. This chain is Ribonuclease 8 (RNASE8), found in Homo sapiens (Human).